We begin with the raw amino-acid sequence, 297 residues long: MSLTRRPPKSPPQRPPRISGVVRLRLDIAYDGTDFAGWAAQVGQRTVAGDLDAALTTIFRTPVRLRAAGRTDAGVHASGQVAHVDVPADALPNAYPRAGHVGDPEFLPLLRRLGRFLPADVRILDITRAPAGFDARFSALRRHYVYRLSTAPYGVEPQQARYITAWPRELDLDAMTAASRDLMGLHDFAAFCRHREGATTIRDLQRLDWSRAGTLVTAHVTADAFCWSMVRSLVGALLAVGEHRRATTWCRELLTATGRSSDFAVAPAHGLTLIQVDYPPDDQLASRNLVTRDVRSG.

Catalysis depends on Asp72, which acts as the Nucleophile. Position 144 (Tyr144) interacts with substrate.

The protein belongs to the tRNA pseudouridine synthase TruA family. As to quaternary structure, homodimer.

The enzyme catalyses uridine(38/39/40) in tRNA = pseudouridine(38/39/40) in tRNA. Functionally, formation of pseudouridine at positions 38, 39 and 40 in the anticodon stem and loop of transfer RNAs. In Mycobacterium bovis (strain ATCC BAA-935 / AF2122/97), this protein is tRNA pseudouridine synthase A.